A 750-amino-acid polypeptide reads, in one-letter code: Polyribonucleotide nucleotidyltransferase (750 aa).

Mg(2+)-binding residues include Asp-489 and Asp-495. The KH domain maps to Pro-556–Ile-620. One can recognise an S1 motif domain in the interval Gly-630–Lys-701. Positions Lys-697–Asp-750 are disordered. The segment covering Ala-702 to Asp-750 has biased composition (basic and acidic residues).

This sequence belongs to the polyribonucleotide nucleotidyltransferase family. The cofactor is Mg(2+).

It localises to the cytoplasm. It carries out the reaction RNA(n+1) + phosphate = RNA(n) + a ribonucleoside 5'-diphosphate. Involved in mRNA degradation. Catalyzes the phosphorolysis of single-stranded polyribonucleotides processively in the 3'- to 5'-direction. The chain is Polyribonucleotide nucleotidyltransferase from Christiangramia forsetii (strain DSM 17595 / CGMCC 1.15422 / KT0803) (Gramella forsetii).